The following is a 524-amino-acid chain: Acetyl-CoA hydrolase (524 aa).

Residue 279–283 (GIGNI) participates in CoA binding. The active-site 5-glutamyl coenzyme A thioester intermediate is glutamate 304. Glycine 398 is a CoA binding site.

It belongs to the acetyl-CoA hydrolase/transferase family.

The protein localises to the cytoplasm. The enzyme catalyses acetyl-CoA + H2O = acetate + CoA + H(+). Functionally, presumably involved in regulating the intracellular acetyl-CoA pool for fatty acid and cholesterol synthesis and fatty acid oxidation. The sequence is that of Acetyl-CoA hydrolase (ACH1) from Yarrowia lipolytica (strain CLIB 122 / E 150) (Yeast).